Consider the following 947-residue polypeptide: Mitogen-activated protein kinase kinase kinase 14 (947 aa).

Disordered regions lie at residues 1–37 and 135–171; these read MAVM…KKQS and KGKR…TPEQ. Basic residues predominate over residues 135-151; that stretch reads KGKRRSKARKKRKKKSS. One can recognise a Protein kinase domain in the interval 400–655; sequence ATHQLRLGRG…ELGGKVNRAL (256 aa). An interaction with ZFP91 region spans residues 401–653; the sequence is THQLRLGRGS…AAELGGKVNR (253 aa). ATP contacts are provided by residues 406 to 414 and Lys-429; that span reads LGRGSFGEV. Catalysis depends on Asp-515, which acts as the Proton acceptor. The residue at position 559 (Thr-559) is a Phosphothreonine. Disordered stretches follow at residues 662–766 and 805–830; these read KSPW…ATVP and LSDD…GVHS. The span at 665–674 shows a compositional bias: basic and acidic residues; it reads WRGEYKEPRH. The segment covering 713–727 has biased composition (pro residues); sequence LQPPLPPEPPEPNKS. The segment covering 741–752 has biased composition (low complexity); that stretch reads EPLPLSSLEPAP. The span at 814 to 829 shows a compositional bias: polar residues; the sequence is SKASQSSRDTLSSGVH.

The protein belongs to the protein kinase superfamily. STE Ser/Thr protein kinase family. MAP kinase kinase kinase subfamily. As to quaternary structure, interacts with TRAF2, TRAF5, TRAF6, IKKA and NFKB2/P100. Interacts with TRAF3 and PELI3. Interacts with NIBP; the interaction is direct. Interacts with ARRB1 and ARRB2. Interacts with GRB10. Interacts with ZFP91. Interacts with NLRP12; this interaction promotes proteasomal degradation of MAP3K14. Directly interacts with DDX3X. Interacts (via C-terminus and kinase domain) with PPPC3A (via N-terminus) and PPP3CB. In terms of processing, autophosphorylated. Phosphorylation at Thr-559 is required to activate its kinase activity and 'Lys-63'-linked polyubiquitination. Phosphorylated by CHUK/IKKA leading to MAP3K14 destabilization. Ubiquitinated. Undergoes both 'Lys-48'- and 'Lys-63'-linked polyubiquitination. 'Lys-48'-linked polyubiquitination leads to its degradation by the proteasome, while 'Lys-63'-linked polyubiquitination stabilizes and activates it. Weakly expressed in testis, small intestine, spleen, thymus, peripheral blood leukocytes, prostate, ovary and colon.

It is found in the cytoplasm. The enzyme catalyses L-seryl-[protein] + ATP = O-phospho-L-seryl-[protein] + ADP + H(+). The catalysed reaction is L-threonyl-[protein] + ATP = O-phospho-L-threonyl-[protein] + ADP + H(+). Lymphotoxin beta-activated kinase which seems to be exclusively involved in the activation of NF-kappa-B and its transcriptional activity. Phosphorylates CHUK/IKKA, thereby promoting proteolytic processing of NFKB2/P100, which leads to NF-kappa-B activation via the non-canonical pathway. Has an essential role in the non-canonical NF-kappa-B signaling that regulates genes encoding molecules involved in B-cell survival, lymphoid organogenesis, and immune response. Could act in a receptor-selective manner. This chain is Mitogen-activated protein kinase kinase kinase 14, found in Homo sapiens (Human).